A 275-amino-acid polypeptide reads, in one-letter code: NAD kinase (275 aa).

Asp68 functions as the Proton acceptor in the catalytic mechanism. NAD(+) is bound by residues 68 to 69, Arg73, 136 to 137, Lys147, Arg164, Asp166, 177 to 182, Ala201, and Gln236; these read DG, NE, and TAYAMS.

This sequence belongs to the NAD kinase family. Requires a divalent metal cation as cofactor.

It is found in the cytoplasm. The enzyme catalyses NAD(+) + ATP = ADP + NADP(+) + H(+). Functionally, involved in the regulation of the intracellular balance of NAD and NADP, and is a key enzyme in the biosynthesis of NADP. Catalyzes specifically the phosphorylation on 2'-hydroxyl of the adenosine moiety of NAD to yield NADP. In Methanosarcina acetivorans (strain ATCC 35395 / DSM 2834 / JCM 12185 / C2A), this protein is NAD kinase.